The primary structure comprises 204 residues: 3,4-dihydroxy-2-butanone 4-phosphate synthase (204 aa).

Residue glutamate 30 coordinates Mg(2+). Aspartate 34 lines the D-ribulose 5-phosphate pocket. Cysteine 59 is modified (S-glutathionyl cysteine). D-ribulose 5-phosphate-binding positions include threonine 85 and 142 to 146 (RRGHT). Histidine 145 is a Mg(2+) binding site.

Homodimer. Requires Mg(2+) as cofactor. The cofactor is Mn(2+). Post-translationally, S-glutathionylation is reversible and dependent on a glutaredoxin.

It carries out the reaction D-ribulose 5-phosphate = (2S)-2-hydroxy-3-oxobutyl phosphate + formate + H(+). The protein operates within cofactor biosynthesis; riboflavin biosynthesis; 2-hydroxy-3-oxobutyl phosphate from D-ribulose 5-phosphate: step 1/1. Catalyzes the conversion of D-ribulose 5-phosphate to formate and 3,4-dihydroxy-2-butanone 4-phosphate. The polypeptide is 3,4-dihydroxy-2-butanone 4-phosphate synthase (RIB3) (Candida albicans (strain SC5314 / ATCC MYA-2876) (Yeast)).